Reading from the N-terminus, the 213-residue chain is Small ribosomal subunit protein uS4 (213 aa).

One can recognise an S4 RNA-binding domain in the interval 97 to 165 (RRLDNVVYRM…AKEQLRIKNA (69 aa)).

Belongs to the universal ribosomal protein uS4 family. In terms of assembly, part of the 30S ribosomal subunit. Contacts protein S5. The interaction surface between S4 and S5 is involved in control of translational fidelity.

One of the primary rRNA binding proteins, it binds directly to 16S rRNA where it nucleates assembly of the body of the 30S subunit. In terms of biological role, with S5 and S12 plays an important role in translational accuracy. The polypeptide is Small ribosomal subunit protein uS4 (Psychrobacter sp. (strain PRwf-1)).